Reading from the N-terminus, the 431-residue chain is O-methyltransferase gliM (431 aa).

Positions 20 to 85 (EFKAIVNDLR…SMDKLQLQLV (66 aa)) form a coiled coil. S-adenosyl-L-methionine contacts are provided by residues Asp287 and 319 to 321 (GDF). The Proton acceptor role is filled by His338.

Belongs to the class I-like SAM-binding methyltransferase superfamily. Cation-independent O-methyltransferase family. COMT subfamily.

It functions in the pathway mycotoxin biosynthesis. O-methyltransferase; part of the gene cluster that mediates the biosynthesis of gliotoxin, a member of the epipolythiodioxopiperazine (ETP) class of toxins characterized by a disulfide bridged cyclic dipeptide. The first step in gliotoxin biosynthesis is the condensation of serine and phenylalanine to form the cyclo-L-phenylalanyl-L-serine diketopiperazine (DKP) by the NRPS gliP. GliP is also able to produce the DKP cyclo-L-tryptophanyl-L-serine, suggesting that the substrate specificity of the first adenylation (A) domain in gliP is sufficiently relaxed to accommodate both L-Phe and L-Trp. The cytochrome P450 monooxygenase gliC has been shown to catalyze the subsequent hydroxylation of the alpha-carbon of L-Phe in cyclo-L-phenylalanyl-L-serine whereas the second cytochrome P450 enzyme, gliF, is presumably involved in the modification of the DKP side chain. The glutathione S-transferase (GST) gliG then forms a bis-glutathionylated biosynthetic intermediate which is responsible for the sulfurization of gliotoxin. This bis-glutathionylated intermediate is subsequently processed by the gamma-glutamyl cyclotransferase gliK to remove both gamma-glutamyl moieties. Subsequent processing via gliI yields a biosynthetic intermediate, which is N-methylated via the N-methyltransferase gliN, before the gliotoxin oxidoreductase gliT-mediated disulfide bridge closure. GliN-mediated amide methylation confers stability to ETP, damping the spontaneous formation of tri- and tetrasulfides. Intracellular dithiol gliotoxin oxidized by gliT is subsequently effluxed by gliA. Gliotoxin contributes to pathogenesis during invasive aspergillosis. In macrophages and neutrophils, gliotoxin showed inhibition of various different cell functions including cytokine production, antigen presentation, phagocytosis, and production of reactive oxygen species. The sequence is that of O-methyltransferase gliM from Aspergillus fumigatus (strain ATCC MYA-4609 / CBS 101355 / FGSC A1100 / Af293) (Neosartorya fumigata).